We begin with the raw amino-acid sequence, 401 residues long: Tryptophan synthase beta chain (401 aa).

Residue Lys-92 is modified to N6-(pyridoxal phosphate)lysine.

This sequence belongs to the TrpB family. Tetramer of two alpha and two beta chains. The cofactor is pyridoxal 5'-phosphate.

It carries out the reaction (1S,2R)-1-C-(indol-3-yl)glycerol 3-phosphate + L-serine = D-glyceraldehyde 3-phosphate + L-tryptophan + H2O. The protein operates within amino-acid biosynthesis; L-tryptophan biosynthesis; L-tryptophan from chorismate: step 5/5. The beta subunit is responsible for the synthesis of L-tryptophan from indole and L-serine. In Vesicomyosocius okutanii subsp. Calyptogena okutanii (strain HA), this protein is Tryptophan synthase beta chain.